Consider the following 620-residue polypeptide: MSFDIAKYPTLALVDSTQELRLLPKESLPKLSDELRRYLLDSVSRSSGHFASGLGTVELTVALHYVYNTPFDQLIWDVGHQAYPHKILTGRRDKIGTIRQKGGLHPFPWRGESEFDVLSVGHSSTSISAGIGIAVAAEKENKQRRTVCVIGDGAITAGMAFEAMNHAGDIKPDMLVILNDNEMSISENVGALNNHLAQLLSGKLYSTLREGGKKVFSGVPPIKELLKRTEEHIKGMVVPGTLFEELGFNYIGPVDGHDVLGLVTTLKNMRDLKGPQFLHIMTKKGRGYEPAEKDPITFHAVPKFDPTSGCLPKSSGGMPSYSKIFGDWLCETAAKDNKLMAVTPAMREGSGMVEFSKKYPDQYFDVAIAEQHAVTFAAGLAIGGYKPIVAIYSTFLQRAYDQVIHDVAIQKLPVLFAIDRAGIVGADGQTHQGAFDLSFLRCVPDMVVMTPSDENECRQMLFTGYHYQDGPSAVRYPRGNAVGVELEPLTKMPIGKGIVKRHGEKLAILNFGTLMPEAAKVAESMNATLVDMRFVKPLDETLILEMASRHEVLITLEENAIMGGAGSGVNEVLMANRKPIPVLNLGLPDRFIPQGTQDEARAEIGLDAAGIEAKIRTWLA.

Residues His80 and 121–123 (GHS) each bind thiamine diphosphate. Asp152 provides a ligand contact to Mg(2+). Residues 153-154 (GA), Asn181, Tyr288, and Glu370 contribute to the thiamine diphosphate site. Asn181 serves as a coordination point for Mg(2+).

The protein belongs to the transketolase family. DXPS subfamily. As to quaternary structure, homodimer. It depends on Mg(2+) as a cofactor. The cofactor is thiamine diphosphate.

The catalysed reaction is D-glyceraldehyde 3-phosphate + pyruvate + H(+) = 1-deoxy-D-xylulose 5-phosphate + CO2. The protein operates within metabolic intermediate biosynthesis; 1-deoxy-D-xylulose 5-phosphate biosynthesis; 1-deoxy-D-xylulose 5-phosphate from D-glyceraldehyde 3-phosphate and pyruvate: step 1/1. Its function is as follows. Catalyzes the acyloin condensation reaction between C atoms 2 and 3 of pyruvate and glyceraldehyde 3-phosphate to yield 1-deoxy-D-xylulose-5-phosphate (DXP). This Enterobacter sp. (strain 638) protein is 1-deoxy-D-xylulose-5-phosphate synthase.